A 928-amino-acid chain; its full sequence is Protein NETWORKED 2B (928 aa).

Residues 10-90 (YSWWWASHIR…ERYDHLSTEL (81 aa)) enclose the NAB domain. Residues 108–144 (PLVDDDDDDDDDNPKKPPKHLHLIPSGTNIPQVPEVP) form a disordered region. Acidic residues predominate over residues 110–119 (VDDDDDDDDD). 2 coiled-coil regions span residues 207-309 (SYEQ…AKKA) and 360-445 (ALLK…VKMD). 2 disordered regions span residues 447–472 (DVEG…SISN) and 489–529 (KQSR…EERR). A compositionally biased stretch (acidic residues) spans 457 to 468 (DIQEEDTVEDSD). A compositionally biased stretch (basic and acidic residues) spans 489–506 (KQSRDQESMQEEKSETRD). Residues 547–574 (LLDEYSSVLRDYREVKRKLSEVEKKNRD) are a coiled coil. Residues 620 to 651 (AESVSISHSSNSSFSMPPLPQRGDLKRASEQE) form a disordered region. Positions 622-634 (SVSISHSSNSSFS) are enriched in low complexity. Residues 642-651 (GDLKRASEQE) are compositionally biased toward basic and acidic residues.

The protein belongs to the NET family.

Its function is as follows. Plant-specific actin binding protein. May be part of a membrane-cytoskeletal adapter complex. The chain is Protein NETWORKED 2B from Arabidopsis thaliana (Mouse-ear cress).